Consider the following 821-residue polypeptide: Nitrogen permease regulator 3 (821 aa).

An N-terminal signal peptide occupies residues 1–21 (MSLNLPNPSILGILLVVSTHS). Disordered regions lie at residues 29–64 (YPPD…ELDI), 116–194 (RQTS…GIPP), 246–283 (GSWK…DYET), and 654–694 (ENEG…PEDI). Positions 116-142 (RQTSQERNKIYGHKQSDSHIDPDEIKS) are enriched in basic and acidic residues. Over residues 170–192 (KKTISSISDSQKSSTSKASTSGI) the composition is skewed to low complexity. Residues 249–266 (KSKHSHRPKSGKSSKGRS) show a composition bias toward basic residues. The span at 669-688 (ADPNISNKLNAGTDNTSKTE) shows a compositional bias: polar residues.

The protein belongs to the NPR3 family.

Its function is as follows. Mediates inactivation of the TORC1 complex in response to amino acid starvation. Required for meiotic nuclear division. The protein is Nitrogen permease regulator 3 (NPR3) of Debaryomyces hansenii (strain ATCC 36239 / CBS 767 / BCRC 21394 / JCM 1990 / NBRC 0083 / IGC 2968) (Yeast).